Here is a 245-residue protein sequence, read N- to C-terminus: 4-hydroxy-tetrahydrodipicolinate reductase (245 aa).

NAD(+) contacts are provided by residues 7–12, 75–77, and 102–105; these read GAKGKV, GTT, and APNF. H132 (proton donor/acceptor) is an active-site residue. H133 lines the (S)-2,3,4,5-tetrahydrodipicolinate pocket. The active-site Proton donor is K136. A (S)-2,3,4,5-tetrahydrodipicolinate-binding site is contributed by 142–143; sequence GT.

Belongs to the DapB family.

It is found in the cytoplasm. It carries out the reaction (S)-2,3,4,5-tetrahydrodipicolinate + NAD(+) + H2O = (2S,4S)-4-hydroxy-2,3,4,5-tetrahydrodipicolinate + NADH + H(+). The catalysed reaction is (S)-2,3,4,5-tetrahydrodipicolinate + NADP(+) + H2O = (2S,4S)-4-hydroxy-2,3,4,5-tetrahydrodipicolinate + NADPH + H(+). The protein operates within amino-acid biosynthesis; L-lysine biosynthesis via DAP pathway; (S)-tetrahydrodipicolinate from L-aspartate: step 4/4. Its function is as follows. Catalyzes the conversion of 4-hydroxy-tetrahydrodipicolinate (HTPA) to tetrahydrodipicolinate. This is 4-hydroxy-tetrahydrodipicolinate reductase from Mycolicibacterium gilvum (strain PYR-GCK) (Mycobacterium gilvum (strain PYR-GCK)).